The primary structure comprises 204 residues: Methylthioribulose-1-phosphate dehydratase (204 aa).

His96 and His98 together coordinate Zn(2+).

The protein belongs to the aldolase class II family. MtnB subfamily. It depends on Zn(2+) as a cofactor.

It catalyses the reaction 5-(methylsulfanyl)-D-ribulose 1-phosphate = 5-methylsulfanyl-2,3-dioxopentyl phosphate + H2O. Its pathway is amino-acid biosynthesis; L-methionine biosynthesis via salvage pathway; L-methionine from S-methyl-5-thio-alpha-D-ribose 1-phosphate: step 2/6. Its function is as follows. Catalyzes the dehydration of methylthioribulose-1-phosphate (MTRu-1-P) into 2,3-diketo-5-methylthiopentyl-1-phosphate (DK-MTP-1-P). The sequence is that of Methylthioribulose-1-phosphate dehydratase from Methylococcus capsulatus (strain ATCC 33009 / NCIMB 11132 / Bath).